The chain runs to 879 residues: Metabotropic glutamate receptor 3 (879 aa).

A signal peptide spans 1 to 22; it reads MKMLTRLQILMLALFSKGFLLS. Residues 23-576 are Extracellular-facing; the sequence is LGDHNFMRRE…EDYIKWEDAW (554 aa). A disulfide bridge connects residues Cys57 and Cys99. Residues Arg68, Ser151, and 172–174 each bind L-glutamate; that span reads AST. Asn209 is a glycosylation site (N-linked (GlcNAc...) asparagine). Position 222 (Tyr222) interacts with L-glutamate. Intrachain disulfides connect Cys240–Cys527, Cys361–Cys373, Cys412–Cys419, Cys509–Cys528, Cys513–Cys531, Cys534–Cys546, and Cys549–Cys562. Asn292 carries N-linked (GlcNAc...) asparagine glycosylation. Asp301 is a binding site for L-glutamate. Position 389 (Lys389) interacts with L-glutamate. N-linked (GlcNAc...) asparagine glycosylation is found at Asn414 and Asn439. The chain crosses the membrane as a helical span at residues 577-599; sequence AIGPVTIACLGFLCTCIVITVFI. The Cytoplasmic segment spans residues 600–613; that stretch reads KHNNTPLVKASGRE. Residues 614-634 form a helical membrane-spanning segment; the sequence is LCYILLFGVSLSYCMTFFFIA. Residues 635-645 lie on the Extracellular side of the membrane; the sequence is KPSPVICALRR. Residues 646 to 664 traverse the membrane as a helical segment; it reads LGLGTSFAICYSALLTKTN. Residues 665 to 688 are Cytoplasmic-facing; that stretch reads CIARIFDGVKNGAQRPKFISPSSQ. A helical membrane pass occupies residues 689 to 709; it reads VFICLGLILVQIVMVSVWLIL. The Extracellular portion of the chain corresponds to 710–734; it reads ETPGTRRYTLPEKRETVILKCNVKD. A helical transmembrane segment spans residues 735–756; it reads SSMLISLTYDVVLVILCTVYAF. Topologically, residues 757–769 are cytoplasmic; the sequence is KTRKCPENFNEAK. A helical transmembrane segment spans residues 770–792; that stretch reads FIGFTMYTTCIIWLAFLPIFYVT. At 793 to 802 the chain is on the extracellular side; that stretch reads SSDYRVQTTT. The helical transmembrane segment at 803–828 threads the bilayer; the sequence is MCISVSLSGFVVLGCLFAPKVHIVLF. Residues 829 to 879 lie on the Cytoplasmic side of the membrane; it reads QPQKNVVTHRLHLNRFSVSGTATTYSQSSASTYVPTVCNGREVLDSTTSSL.

This sequence belongs to the G-protein coupled receptor 3 family. Interacts with TAMALIN. Is widely distributed in the CNS. Predominant expression is seen in the neuronal cells of the cerebral cortex, dentate gyrus, and glial cells throughout brain regions.

Its subcellular location is the cell membrane. Functionally, G-protein coupled receptor for glutamate. Ligand binding causes a conformation change that triggers signaling via guanine nucleotide-binding proteins (G proteins) and modulates the activity of down-stream effectors. Signaling inhibits adenylate cyclase activity. The polypeptide is Metabotropic glutamate receptor 3 (Grm3) (Rattus norvegicus (Rat)).